A 350-amino-acid polypeptide reads, in one-letter code: Ribosomal RNA large subunit methyltransferase Cfr (350 aa).

The active-site Proton acceptor is glutamate 92. The Radical SAM core domain maps to glutamate 99–glutamate 333. An intrachain disulfide couples cysteine 106 to cysteine 338. Positions 113, 117, and 120 each coordinate [4Fe-4S] cluster. Residues glycine 159 to glutamate 160, serine 190, serine 213 to histidine 215, and asparagine 293 each bind S-adenosyl-L-methionine. The active-site S-methylcysteine intermediate is cysteine 338.

Belongs to the radical SAM superfamily. RlmN family. Cfr subfamily. Requires [4Fe-4S] cluster as cofactor.

The protein localises to the cytoplasm. The catalysed reaction is adenosine(2503) in 23S rRNA + 2 reduced [2Fe-2S]-[ferredoxin] + 2 S-adenosyl-L-methionine = 8-methyladenosine(2503) in 23S rRNA + 5'-deoxyadenosine + L-methionine + 2 oxidized [2Fe-2S]-[ferredoxin] + S-adenosyl-L-homocysteine. Specifically methylates position 8 of adenine 2503 in 23S rRNA. Confers resistance to some classes of antibiotics. The polypeptide is Ribosomal RNA large subunit methyltransferase Cfr (Shouchella clausii (strain KSM-K16) (Alkalihalobacillus clausii)).